The chain runs to 144 residues: Cytochrome c oxidase subunit 4 isoform 1, mitochondrial (144 aa).

Residues 1–73 (SVVKSEDFTL…SFAEMNRRSN (73 aa)) are Mitochondrial matrix-facing. N6-acetyllysine; alternate is present on Lys4. Lys4 carries the N6-succinyllysine; alternate modification. The residue at position 28 (Lys28) is an N6-acetyllysine. Phosphoserine is present on residues Ser31 and Ser33. At Lys35 the chain carries N6-acetyllysine; alternate. Position 35 is an N6-succinyllysine; alternate (Lys35). Residue Lys42 is modified to N6-acetyllysine. Residues 74–99 (EWKTVVGTAMFFFGITALIVMWEKRY) traverse the membrane as a helical segment. Residues 100 to 144 (VYGPLPQTFDKEWVAMQTKRMLDMKVNPIQGLASKWDYEKNEWKK) lie on the Mitochondrial intermembrane side of the membrane.

The protein belongs to the cytochrome c oxidase IV family. In terms of assembly, component of the cytochrome c oxidase (complex IV, CIV), a multisubunit enzyme composed of 14 subunits. The complex is composed of a catalytic core of 3 subunits MT-CO1, MT-CO2 and MT-CO3, encoded in the mitochondrial DNA, and 11 supernumerary subunits COX4I, COX5A, COX5B, COX6A, COX6B, COX6C, COX7A, COX7B, COX7C, COX8 and NDUFA4, which are encoded in the nuclear genome. The complex exists as a monomer or a dimer and forms supercomplexes (SCs) in the inner mitochondrial membrane with NADH-ubiquinone oxidoreductase (complex I, CI) and ubiquinol-cytochrome c oxidoreductase (cytochrome b-c1 complex, complex III, CIII), resulting in different assemblies (supercomplex SCI(1)III(2)IV(1) and megacomplex MCI(2)III(2)IV(2)). Interacts with PHB2; the interaction decreases in absence of SPHK2. Interacts with AFG1L. Interacts with ABCB7; this interaction allows the regulation of cellular iron homeostasis and cellular reactive oxygen species (ROS) levels in cardiomyocytes. Interacts with FLVCR2; this interaction occurs in the absence of heme and is disrupted upon heme binding. Interacts with IRGC.

The protein resides in the mitochondrion inner membrane. Its pathway is energy metabolism; oxidative phosphorylation. In terms of biological role, component of the cytochrome c oxidase, the last enzyme in the mitochondrial electron transport chain which drives oxidative phosphorylation. The respiratory chain contains 3 multisubunit complexes succinate dehydrogenase (complex II, CII), ubiquinol-cytochrome c oxidoreductase (cytochrome b-c1 complex, complex III, CIII) and cytochrome c oxidase (complex IV, CIV), that cooperate to transfer electrons derived from NADH and succinate to molecular oxygen, creating an electrochemical gradient over the inner membrane that drives transmembrane transport and the ATP synthase. Cytochrome c oxidase is the component of the respiratory chain that catalyzes the reduction of oxygen to water. Electrons originating from reduced cytochrome c in the intermembrane space (IMS) are transferred via the dinuclear copper A center (CU(A)) of subunit 2 and heme A of subunit 1 to the active site in subunit 1, a binuclear center (BNC) formed by heme A3 and copper B (CU(B)). The BNC reduces molecular oxygen to 2 water molecules using 4 electrons from cytochrome c in the IMS and 4 protons from the mitochondrial matrix. This Theropithecus gelada (Gelada baboon) protein is Cytochrome c oxidase subunit 4 isoform 1, mitochondrial (COX4I1).